Consider the following 460-residue polypeptide: Probable lipase C14C8.15 (460 aa).

Over 1 to 16 (MTLNGNIMKYCLEKGE) the chain is Cytoplasmic. The helical; Signal-anchor for type II membrane protein transmembrane segment at 17 to 37 (ILISFLLIALESMFRICTVIL) threads the bilayer. At 38 to 460 (PSPLRNWFYE…LVDGVMNHTI (423 aa)) the chain is on the lumenal side. S214 acts as the Nucleophile in catalysis. Residue N308 is glycosylated (N-linked (GlcNAc...) asparagine). Catalysis depends on charge relay system residues D382 and H408. The N-linked (GlcNAc...) asparagine glycan is linked to N457.

It belongs to the AB hydrolase superfamily. Lipase family.

The protein localises to the golgi apparatus. It localises to the membrane. In terms of biological role, probable lipase. This Schizosaccharomyces pombe (strain 972 / ATCC 24843) (Fission yeast) protein is Probable lipase C14C8.15.